Here is a 621-residue protein sequence, read N- to C-terminus: Chaperone protein HtpG (621 aa).

Residues 1-328 (MKQEKKKFDA…SEDLPLNISR (328 aa)) form an a; substrate-binding region. The tract at residues 329 to 544 (ESLQHNNVLE…EAAMDIRMER (216 aa)) is b. Positions 478-498 (DVDQATSSSEEKNKDDKKSDD) are disordered. The segment covering 486–498 (SEEKNKDDKKSDD) has biased composition (basic and acidic residues). The segment at 545–621 (FLIEQKQIAN…LNDIVQKAIL (77 aa)) is c.

Belongs to the heat shock protein 90 family. In terms of assembly, homodimer.

Its subcellular location is the cytoplasm. Functionally, molecular chaperone. Has ATPase activity. The polypeptide is Chaperone protein HtpG (Rickettsia bellii (strain RML369-C)).